The chain runs to 412 residues: 5,5'-dehydrodivanillate O-demethylase ferredoxin reductase subunit (412 aa).

A14, K49, V82, R130, D279, and V298 together coordinate FAD.

The protein belongs to the FAD-dependent oxidoreductase family. Monomer. The three-component monooxygenase is composed of an oxygenase (LigXa), a ferredoxin (LigXc) and a ferredoxin reductase (LigXd). FAD serves as cofactor.

The catalysed reaction is 5,5'-dehydrodivanillate + NADH + O2 + H(+) = 2,2',3-trihydroxy-3'-methoxy-5,5'-dicarboxybiphenyl + formaldehyde + NAD(+) + H2O. Its function is as follows. Involved in the catabolism of 5,5'-dehydrodivanillate (DDVA), an intermediate in the biodegradation of lignin. Part of a three-component monooxygenase that catalyzes the O-demethylation of DDVA, leading to the formation of 2,2',3-trihydroxy-3'-methoxy-5,5'-dicarboxybiphenyl (OH-DDVA). LigXd probably transfers the electrons from NADH to LigXc. The protein is 5,5'-dehydrodivanillate O-demethylase ferredoxin reductase subunit of Sphingobium sp. (strain NBRC 103272 / SYK-6).